Consider the following 257-residue polypeptide: Probable pectate lyase G (257 aa).

The N-terminal stretch at M1–A24 is a signal peptide.

It belongs to the polysaccharide lyase 3 family. Ca(2+) serves as cofactor.

Its subcellular location is the secreted. It carries out the reaction Eliminative cleavage of (1-&gt;4)-alpha-D-galacturonan to give oligosaccharides with 4-deoxy-alpha-D-galact-4-enuronosyl groups at their non-reducing ends.. In terms of biological role, pectinolytic enzyme consist of four classes of enzymes: pectin lyase, polygalacturonase, pectin methylesterase and rhamnogalacturonase. Among pectinolytic enzymes, pectin lyase is the most important in depolymerization of pectin, since it cleaves internal glycosidic bonds of highly methylated pectins. Favors pectate, the anion, over pectin, the methyl ester. The chain is Probable pectate lyase G (plyG) from Emericella nidulans (strain FGSC A4 / ATCC 38163 / CBS 112.46 / NRRL 194 / M139) (Aspergillus nidulans).